The chain runs to 142 residues: Hemoglobin subunit alpha (142 aa).

Residue Ser1 is modified to N-acetylserine. In terms of domain architecture, Globin spans 1-142 (SLSDKDKAAV…VALALAERYR (142 aa)). His59 is an O2 binding site. Heme b is bound at residue His88.

The protein belongs to the globin family. Heterotetramer of two alpha chains and two beta chains. As to expression, red blood cells.

Its function is as follows. Involved in oxygen transport from gills to the various peripheral tissues. The protein is Hemoglobin subunit alpha (hba) of Gymnodraco acuticeps (Antarctic dragonfish).